The primary structure comprises 471 residues: Cysteine--tRNA ligase (471 aa).

Cys-29 is a binding site for Zn(2+). The 'HIGH' region signature appears at 31–41; the sequence is PTVYDYFHIGN. Zn(2+) contacts are provided by Cys-212, His-237, and Glu-241. Residues 269 to 273 carry the 'KMSKS' region motif; it reads KMSKS. Residue Lys-272 participates in ATP binding.

The protein belongs to the class-I aminoacyl-tRNA synthetase family. Monomer. Requires Zn(2+) as cofactor.

It localises to the cytoplasm. The catalysed reaction is tRNA(Cys) + L-cysteine + ATP = L-cysteinyl-tRNA(Cys) + AMP + diphosphate. The polypeptide is Cysteine--tRNA ligase (Symbiobacterium thermophilum (strain DSM 24528 / JCM 14929 / IAM 14863 / T)).